The following is a 544-amino-acid chain: O-phosphoserine--tRNA(Cys) ligase (544 aa).

Residues 194–196, 239–241, 281–282, and Asn335 each bind substrate; these read HMT, SAS, and YY.

Belongs to the class-II aminoacyl-tRNA synthetase family. O-phosphoseryl-tRNA(Cys) synthetase subfamily. In terms of assembly, homotetramer. Interacts with SepCysS.

The catalysed reaction is tRNA(Cys) + O-phospho-L-serine + ATP = O-phospho-L-seryl-tRNA(Cys) + AMP + diphosphate. Catalyzes the attachment of O-phosphoserine (Sep) to tRNA(Cys). The polypeptide is O-phosphoserine--tRNA(Cys) ligase (Methanopyrus kandleri (strain AV19 / DSM 6324 / JCM 9639 / NBRC 100938)).